Consider the following 1044-residue polypeptide: Isoleucine--tRNA ligase (1044 aa).

The 'HIGH' region motif lies at 48-58 (PFATGLPHFGH). Positions 594–598 (KMSKS) match the 'KMSKS' region motif. K597 lines the ATP pocket.

The protein belongs to the class-I aminoacyl-tRNA synthetase family. IleS type 2 subfamily. As to quaternary structure, monomer. The cofactor is Zn(2+).

Its subcellular location is the cytoplasm. The catalysed reaction is tRNA(Ile) + L-isoleucine + ATP = L-isoleucyl-tRNA(Ile) + AMP + diphosphate. In terms of biological role, catalyzes the attachment of isoleucine to tRNA(Ile). As IleRS can inadvertently accommodate and process structurally similar amino acids such as valine, to avoid such errors it has two additional distinct tRNA(Ile)-dependent editing activities. One activity is designated as 'pretransfer' editing and involves the hydrolysis of activated Val-AMP. The other activity is designated 'posttransfer' editing and involves deacylation of mischarged Val-tRNA(Ile). This Borrelia duttonii (strain Ly) protein is Isoleucine--tRNA ligase.